We begin with the raw amino-acid sequence, 92 residues long: Indole-3-acetic acid-induced protein ARG7 (92 aa).

It belongs to the ARG7 family.

The protein is Indole-3-acetic acid-induced protein ARG7 (ARG7) of Vigna radiata var. radiata (Mung bean).